Consider the following 232-residue polypeptide: LexA repressor (232 aa).

The tract at residues Met1–Arg25 is disordered. A compositionally biased stretch (basic and acidic residues) spans Arg16–Arg25. Positions Ile46–Arg66 form a DNA-binding region, H-T-H motif. Catalysis depends on for autocatalytic cleavage activity residues Ser156 and Lys193.

Belongs to the peptidase S24 family. As to quaternary structure, homodimer.

It carries out the reaction Hydrolysis of Ala-|-Gly bond in repressor LexA.. Functionally, represses a number of genes involved in the response to DNA damage (SOS response), including recA and lexA. In the presence of single-stranded DNA, RecA interacts with LexA causing an autocatalytic cleavage which disrupts the DNA-binding part of LexA, leading to derepression of the SOS regulon and eventually DNA repair. In Mycolicibacterium vanbaalenii (strain DSM 7251 / JCM 13017 / BCRC 16820 / KCTC 9966 / NRRL B-24157 / PYR-1) (Mycobacterium vanbaalenii), this protein is LexA repressor.